An 887-amino-acid polypeptide reads, in one-letter code: Pyruvate, phosphate dikinase 2 (887 aa).

Thr467 carries the phosphothreonine; by PDRP1 modification. Residue His469 is the Tele-phosphohistidine intermediate of the active site. Positions 575, 632, 761, 782, 783, 784, and 785 each coordinate substrate. Glu761 provides a ligand contact to Mg(2+). Asp785 contributes to the Mg(2+) binding site. Cys847 serves as the catalytic Proton donor.

The protein belongs to the PEP-utilizing enzyme family. Mg(2+) serves as cofactor.

The protein resides in the cytoplasm. The catalysed reaction is pyruvate + phosphate + ATP = phosphoenolpyruvate + AMP + diphosphate + H(+). Formation of phosphoenolpyruvate. The sequence is that of Pyruvate, phosphate dikinase 2 (PPDK2) from Oryza sativa subsp. japonica (Rice).